The primary structure comprises 1733 residues: Desertorin synthase (1733 aa).

Positions 21–358 are N-terminal acylcarrier protein transacylase domain (SAT); sequence RIRQQSRSSR…HAPTRDLTEW (338 aa). The Ketosynthase family 3 (KS3) domain occupies 372–799; that stretch reads DCRIAVVGMS…GGNTALLLEE (428 aa). The span at 406-422 shows a compositional bias: basic and acidic residues; sequence HVPPDRYDVQSHTDPTG. A disordered region spans residues 406–429; it reads HVPPDRYDVQSHTDPTGRRMNTSQ. Active-site for beta-ketoacyl synthase activity residues include cysteine 544, histidine 679, and histidine 718. Residues 903–1211 are malonyl-CoA:ACP transacylase (MAT) domain; the sequence is FVFSGQGSFY…DNWHTLAGSM (309 aa). Positions 1288 to 1420 are N-terminal hotdog fold; sequence HRIVEETFWA…GTVSVGNAAS (133 aa). A PKS/mFAS DH domain is found at 1288–1598; it reads HRIVEETFWA…LRPLPRILMH (311 aa). The segment at 1299–1594 is product template (PT) domain; the sequence is GGRVVMESNV…AGVTLRPLPR (296 aa). The active-site Proton acceptor; for dehydratase activity is histidine 1320. The C-terminal hotdog fold stretch occupies residues 1448-1598; the sequence is ADRLTRDTVY…LRPLPRILMH (151 aa). Catalysis depends on aspartate 1506, which acts as the Proton donor; for dehydratase activity. Positions 1608-1659 are disordered; it reads HNWGNSPAKPEAKPEMVPTSGSSSAAGSPSGSSAGPLSIPERLADPSETSFQ. Low complexity predominate over residues 1627–1643; it reads SGSSSAAGSPSGSSAGP. The region spanning 1659–1733 is the Carrier domain; the sequence is QSKASKVSKA…TVGEVKRQML (75 aa). Serine 1696 carries the O-(pantetheine 4'-phosphoryl)serine modification.

Pantetheine 4'-phosphate is required as a cofactor.

The protein operates within secondary metabolite biosynthesis. Its function is as follows. Non-reducing polyketide synthase; part of the gene cluster that mediates the biosynthesis of the bicoumarin desertorin. The non-reducing polyketide synthase desS first catalyzes the formation of the pentaketidic 4,7-dihydroxy-5-methylcoumarin from acetyl coenzyme A and 4 malonyl coenzyme A molecules. Further O-methylation by desB leads to the formation of 7-demethylsiderin. Then, an oxidative phenol coupling catalyzed by the cytochrome P450 monooxygenase desC forms the 6,8'-dimer M-desertorin A via dimerization the monomeric precursor, 7-demethylsiderin. M-desertorin A is further converted to M-desertorin C. The polypeptide is Desertorin synthase (Aspergillus desertorum (Emericella desertorum)).